Consider the following 178-residue polypeptide: Large ribosomal subunit protein uL6 (178 aa).

This sequence belongs to the universal ribosomal protein uL6 family. In terms of assembly, part of the 50S ribosomal subunit.

This protein binds to the 23S rRNA, and is important in its secondary structure. It is located near the subunit interface in the base of the L7/L12 stalk, and near the tRNA binding site of the peptidyltransferase center. The sequence is that of Large ribosomal subunit protein uL6 from Streptococcus sanguinis (strain SK36).